The following is a 709-amino-acid chain: Acyl-coenzyme A oxidase 4 (709 aa).

Positions 1-12 (MTFTKKNVSVSQ) are enriched in polar residues. A disordered region spans residues 1–29 (MTFTKKNVSVSQGPDPRSSIQKERDSSKW).

Belongs to the acyl-CoA oxidase family. In terms of assembly, homooctamer. FAD is required as a cofactor.

It localises to the peroxisome. It carries out the reaction a 2,3-saturated acyl-CoA + O2 = a (2E)-enoyl-CoA + H2O2. The protein operates within lipid metabolism; peroxisomal fatty acid beta-oxidation. The chain is Acyl-coenzyme A oxidase 4 (POX4) from Candida tropicalis (Yeast).